A 218-amino-acid chain; its full sequence is Testis expressed protein 56 (218 aa).

In Rattus norvegicus (Rat), this protein is Testis expressed protein 56 (Tex56).